A 390-amino-acid chain; its full sequence is ATP phosphoribosyltransferase regulatory subunit (390 aa).

The protein belongs to the class-II aminoacyl-tRNA synthetase family. HisZ subfamily. As to quaternary structure, heteromultimer composed of HisG and HisZ subunits.

The protein localises to the cytoplasm. The protein operates within amino-acid biosynthesis; L-histidine biosynthesis; L-histidine from 5-phospho-alpha-D-ribose 1-diphosphate: step 1/9. Functionally, required for the first step of histidine biosynthesis. May allow the feedback regulation of ATP phosphoribosyltransferase activity by histidine. This chain is ATP phosphoribosyltransferase regulatory subunit, found in Bacillus velezensis (strain DSM 23117 / BGSC 10A6 / LMG 26770 / FZB42) (Bacillus amyloliquefaciens subsp. plantarum).